Here is a 128-residue protein sequence, read N- to C-terminus: Fluoride-specific ion channel FluC (128 aa).

The next 4 membrane-spanning stretches (helical) occupy residues 4–24 (LILA…RYLI), 37–57 (PYGT…IMDI), 63–83 (LISG…LTTF), and 99–119 (ILMG…GVII). Residues Gly78 and Thr81 each contribute to the Na(+) site.

It belongs to the fluoride channel Fluc/FEX (TC 1.A.43) family.

It is found in the cell membrane. The enzyme catalyses fluoride(in) = fluoride(out). With respect to regulation, na(+) is not transported, but it plays an essential structural role and its presence is essential for fluoride channel function. Fluoride-specific ion channel. Important for reducing fluoride concentration in the cell, thus reducing its toxicity. The polypeptide is Fluoride-specific ion channel FluC (Clostridium novyi (strain NT)).